A 125-amino-acid polypeptide reads, in one-letter code: Histone H2A (125 aa).

Residues 1-18 (MSGRGKGGKARAKAKSRS) are compositionally biased toward basic residues. The segment at 1–21 (MSGRGKGGKARAKAKSRSSRA) is disordered. The residue at position 2 (Ser-2) is an N-acetylserine. A Phosphoserine modification is found at Ser-2. Gln-104 carries the post-translational modification N5-methylglutamine.

This sequence belongs to the histone H2A family. The nucleosome is a histone octamer containing two molecules each of H2A, H2B, H3 and H4 assembled in one H3-H4 heterotetramer and two H2A-H2B heterodimers. The octamer wraps approximately 147 bp of DNA.

Its subcellular location is the nucleus. The protein localises to the chromosome. Its function is as follows. Core component of nucleosome. Nucleosomes wrap and compact DNA into chromatin, limiting DNA accessibility to the cellular machineries which require DNA as a template. Histones thereby play a central role in transcription regulation, DNA repair, DNA replication and chromosomal stability. DNA accessibility is regulated via a complex set of post-translational modifications of histones, also called histone code, and nucleosome remodeling. The sequence is that of Histone H2A from Asterias rubens (Common European starfish).